The following is a 489-amino-acid chain: Acetyl-coenzyme A carboxylase carboxyl transferase subunit beta, chloroplastic (489 aa).

A CoA carboxyltransferase N-terminal domain is found at 222–489; sequence LWVQCENCYG…FFPLNSNSIK (268 aa). Residues Cys226, Cys229, Cys245, and Cys248 each contribute to the Zn(2+) site. The C4-type zinc finger occupies 226 to 248; sequence CENCYGLNYKKFFRSKMNICEQC.

Belongs to the AccD/PCCB family. As to quaternary structure, acetyl-CoA carboxylase is a heterohexamer composed of biotin carboxyl carrier protein, biotin carboxylase and 2 subunits each of ACCase subunit alpha and ACCase plastid-coded subunit beta (accD). Zn(2+) is required as a cofactor.

The protein resides in the plastid. The protein localises to the chloroplast stroma. The catalysed reaction is N(6)-carboxybiotinyl-L-lysyl-[protein] + acetyl-CoA = N(6)-biotinyl-L-lysyl-[protein] + malonyl-CoA. It participates in lipid metabolism; malonyl-CoA biosynthesis; malonyl-CoA from acetyl-CoA: step 1/1. In terms of biological role, component of the acetyl coenzyme A carboxylase (ACC) complex. Biotin carboxylase (BC) catalyzes the carboxylation of biotin on its carrier protein (BCCP) and then the CO(2) group is transferred by the transcarboxylase to acetyl-CoA to form malonyl-CoA. This chain is Acetyl-coenzyme A carboxylase carboxyl transferase subunit beta, chloroplastic, found in Buxus microphylla (Littleleaf boxwood).